A 103-amino-acid chain; its full sequence is MKYDGDGRATARFFSGKGCRRAPLFTAPADAARHKRCLWSVSRVRWARDGRFYRSRLASVTVYASLSPFSDERPSSRFRGIALPSERRRLRYSTVGLTRYRTR.

This is an uncharacterized protein from Escherichia coli (strain UTI89 / UPEC).